Here is a 632-residue protein sequence, read N- to C-terminus: Putative ferric transport system permease protein FbpB 1 (632 aa).

A run of 15 helical transmembrane segments spans residues Ser-5–Leu-25, Leu-37–Ser-57, Met-58–Ala-78, Leu-93–Val-113, Leu-144–Tyr-164, Ile-178–Met-198, Gly-223–Leu-243, Tyr-270–Ile-290, Pro-299–Gly-319, Leu-330–Gly-350, Ile-377–Tyr-397, Ile-436–Val-456, Phe-469–Ala-489, Phe-490–Met-510, and Cys-547–Val-567. The ABC transmembrane type-1 1 domain maps to Ile-140–Gln-345. The ABC transmembrane type-1 2 domain maps to Leu-431–Phe-632.

The protein belongs to the binding-protein-dependent transport system permease family. FbpB subfamily. As to quaternary structure, the complex is composed of two ATP-binding proteins (FbpC), two transmembrane proteins (FbpB) and a solute-binding protein (FbpA).

It localises to the cell inner membrane. In terms of biological role, part of the ABC transporter complex FbpABC (TC 3.A.1.10.1) involved in Fe(3+) ions import. Probably responsible for the translocation of the substrate across the membrane. This chain is Putative ferric transport system permease protein FbpB 1 (fbpB1), found in Haemophilus influenzae (strain ATCC 51907 / DSM 11121 / KW20 / Rd).